The chain runs to 147 residues: Globin, polymeric component P2 (147 aa).

A Globin domain is found at 2-146 (PLTADQVAAL…ISDALVAGLE (145 aa)). His96 provides a ligand contact to heme b.

Belongs to the globin family. Polymer.

This chain is Globin, polymeric component P2, found in Glycera dibranchiata (Bloodworm).